The primary structure comprises 72 residues: Defensin-like protein 230 (72 aa).

Residues 1 to 27 form the signal peptide; it reads MEKKSLACLSFLLLVLFVAQEIVVSEA. 4 disulfides stabilise this stretch: Cys-30–Cys-72, Cys-41–Cys-60, Cys-45–Cys-66, and Cys-49–Cys-68.

Belongs to the DEFL family.

It localises to the secreted. This is Defensin-like protein 230 (PI230) from Pisum sativum (Garden pea).